Here is a 148-residue protein sequence, read N- to C-terminus: Large ribosomal subunit protein bL9 (148 aa).

It belongs to the bacterial ribosomal protein bL9 family.

Its function is as follows. Binds to the 23S rRNA. This Azotobacter vinelandii (strain DJ / ATCC BAA-1303) protein is Large ribosomal subunit protein bL9.